A 153-amino-acid polypeptide reads, in one-letter code: Insulin-like growth factor 1 (153 aa).

Residues 49 to 77 (GPETLCGAELVDALQFVCGPRGFYFNKPT) form a b region. 3 cysteine pairs are disulfide-bonded: C54-C96, C66-C109, and C95-C100. The segment at 78–89 (GYGSSIRRAPQT) is c. The segment at 90-110 (GIVDECCFRSCDLRRLEMYCA) is a. A d region spans residues 111 to 118 (PLKPTKSA). The propeptide at 119–153 (RSIRAQRHTDMPKTQKEVHLKNTSRGSAGNKTYRM) is e peptide. The interval 119-153 (RSIRAQRHTDMPKTQKEVHLKNTSRGSAGNKTYRM) is disordered. Positions 125 to 138 (RHTDMPKTQKEVHL) are enriched in basic and acidic residues. Positions 139–153 (KNTSRGSAGNKTYRM) are enriched in polar residues.

It belongs to the insulin family. In terms of assembly, forms a ternary complex with IGFR1 and ITGAV:ITGB3. Forms a ternary complex with IGFR1 and ITGA6:ITGB4. Forms a ternary complex with IGFBP3 and ALS.

The protein resides in the secreted. In terms of biological role, the insulin-like growth factors, isolated from plasma, are structurally and functionally related to insulin but have a much higher growth-promoting activity. May be a physiological regulator of [1-14C]-2-deoxy-D-glucose (2DG) transport and glycogen synthesis in osteoblasts. Stimulates glucose transport in bone-derived osteoblastic (PyMS) cells and is effective at much lower concentrations than insulin, not only regarding glycogen and DNA synthesis but also with regard to enhancing glucose uptake. May play a role in synapse maturation. Ca(2+)-dependent exocytosis of IGF1 is required for sensory perception of smell in the olfactory bulb. Acts as a ligand for IGF1R. Binds to the alpha subunit of IGF1R, leading to the activation of the intrinsic tyrosine kinase activity which autophosphorylates tyrosine residues in the beta subunit thus initiating a cascade of down-stream signaling events leading to activation of the PI3K-AKT/PKB and the Ras-MAPK pathways. Binds to integrins ITGAV:ITGB3 and ITGA6:ITGB4. Its binding to integrins and subsequent ternary complex formation with integrins and IGFR1 are essential for IGF1 signaling. Induces the phosphorylation and activation of IGFR1, MAPK3/ERK1, MAPK1/ERK2 and AKT1. As part of the MAPK/ERK signaling pathway, acts as a negative regulator of apoptosis in cardiomyocytes via promotion of STUB1/CHIP-mediated ubiquitination and degradation of ICER-type isoforms of CREM. The chain is Insulin-like growth factor 1 from Rattus norvegicus (Rat).